The following is a 167-amino-acid chain: E1B protein, small T-antigen (167 aa).

The tract at residues 143–167 is disordered; sequence GLDPVQEEEEEEENLRAGLDPSTEL.

It belongs to the adenoviridae E1B 19 kDa protein family.

The protein resides in the host cell membrane. The protein localises to the host nucleus envelope. It is found in the host nucleus lamina. In terms of biological role, putative adenovirus Bcl-2 homolog that inhibits apoptosis induced by TNF or FAS pathways, as well as p53-mediated apoptosis. Without E1B 19K function, virus production is compromised because of premature death of host cell. Interacts with Bax protein in cell lysates. This is E1B protein, small T-antigen from Human adenovirus F serotype 40 (HAdV-40).